The primary structure comprises 128 residues: Lutropin subunit beta (128 aa).

6 disulfide bridges follow: Cys-18–Cys-66, Cys-32–Cys-81, Cys-35–Cys-119, Cys-43–Cys-97, Cys-47–Cys-99, and Cys-102–Cys-109. Asn-22 carries an N-linked (GlcNAc...) asparagine glycan.

This sequence belongs to the glycoprotein hormones subunit beta family. Heterodimer of a common alpha chain and a unique beta chain which confers biological specificity to thyrotropin, lutropin, follitropin and gonadotropin.

It localises to the secreted. Functionally, promotes spermatogenesis and ovulation by stimulating the testes and ovaries to synthesize steroids. The sequence is that of Lutropin subunit beta (LHB) from Struthio camelus (Common ostrich).